Reading from the N-terminus, the 85-residue chain is Beta-defensin 18 (85 aa).

The N-terminal stretch at 1-23 (MQSAMKLFFIFLIFVFSVSCGPS) is a signal peptide. Intrachain disulfides connect cysteine 39-cysteine 65, cysteine 46-cysteine 60, and cysteine 50-cysteine 66.

Belongs to the beta-defensin family.

It is found in the secreted. In terms of biological role, has antibacterial activity. In Rattus norvegicus (Rat), this protein is Beta-defensin 18 (Defb18).